Here is a 712-residue protein sequence, read N- to C-terminus: Potassium transporter 1 (712 aa).

Topologically, residues 1–19 are cytoplasmic; it reads MNQSPSLIEQGISQQHLKT. A helical transmembrane segment spans residues 20–40; the sequence is LSCANVLTLAYQSLGVIYGDL. Topologically, residues 41 to 67 are extracellular; that stretch reads STSPLYVYKTTFSGKLSLHEDDEEIFG. Residues 68–88 form a helical membrane-spanning segment; that stretch reads VFSFIFWTFTLIALFKYVFIV. Topologically, residues 89-154 are cytoplasmic; that stretch reads LSADDNGEGG…FFEKHPKSQK (66 aa). A helical transmembrane segment spans residues 155–175; sequence CLLLFVLLGTCMAIGDSVLTP. At 176-189 the chain is on the extracellular side; it reads TISVLSAVSGVKLK. Residues 190–210 traverse the membrane as a helical segment; the sequence is IPNLHENYVVIIACIILVAIF. The Cytoplasmic portion of the chain corresponds to 211–219; that stretch reads SVQRYGTHR. A helical transmembrane segment spans residues 220–240; that stretch reads VAFIFAPISTAWLLSISSIGV. The Extracellular portion of the chain corresponds to 241-267; it reads YNTIKWNPRIVSALSPVYMYKFLRSTG. The helical transmembrane segment at 268-288 threads the bilayer; that stretch reads VEGWVSLGGVVLSITGVETMF. Topologically, residues 289–300 are cytoplasmic; sequence ADLGHFSSLSIK. Residues 301 to 321 traverse the membrane as a helical segment; that stretch reads VAFSFFVYPCLILAYMGEAAF. Over 322–340 the chain is Extracellular; it reads LSKHHEDIQQSFYKAIPEP. The helical transmembrane segment at 341 to 361 threads the bilayer; sequence VFWPVFIVATFAAVVGSQAVI. Over 362–392 the chain is Cytoplasmic; that stretch reads SATFSIISQCCALDCFPRVKIIHTSSKIHGQ. A helical transmembrane segment spans residues 393–413; sequence IYIPEVNWMLMCLCLAVTIGL. The Extracellular segment spans residues 414–424; sequence RDTNMMGHAYG. The chain crosses the membrane as a helical span at residues 425–445; it reads LAVTSVMLVTTCLMTLVMTIV. Residues 446–449 are Cytoplasmic-facing; sequence WKQR. The helical transmembrane segment at 450–470 threads the bilayer; sequence IITVLAFVVFFGSIELLYFSS. Over 471 to 474 the chain is Extracellular; the sequence is CVYK. The chain crosses the membrane as a helical span at residues 475–495; the sequence is VPEGGWIPILLSLTFMAVMYI. The Cytoplasmic portion of the chain corresponds to 496–712; that stretch reads WNYGTTKKHE…LLEVGMVYYV (217 aa).

The protein belongs to the HAK/KUP transporter (TC 2.A.72.3) family. In terms of tissue distribution, detected in the whole mature plant but preferentially expressed in roots and stems, and in potassium-starved plants.

The protein localises to the cell membrane. Its function is as follows. High-affinity potassium transporter that could play a major role in the uptake of potassium from the rhizosphere. May act as a low-affinity potassium transporter under high potassium concentrations. Could also transport rubidium. In Arabidopsis thaliana (Mouse-ear cress), this protein is Potassium transporter 1 (POT1).